The sequence spans 343 residues: Flavone 3'-O-methyltransferase OMT2 (343 aa).

(E)-ferulate is bound at residue asparagine 107. The S-adenosyl-L-homocysteine site is built by glycine 184, aspartate 207, aspartate 227, methionine 228, methionine 240, and lysine 241. Histidine 245 serves as the catalytic Proton acceptor. Aspartate 246 lines the (E)-5-hydroxyferulate pocket. Active-site residues include glutamate 273 and glutamate 305.

The protein belongs to the class I-like SAM-binding methyltransferase superfamily. Cation-independent O-methyltransferase family. COMT subfamily. In terms of assembly, homodimer.

It catalyses the reaction (E)-5-hydroxyferulate + S-adenosyl-L-methionine = (E)-sinapate + S-adenosyl-L-homocysteine + H(+). The enzyme catalyses luteolin + S-adenosyl-L-methionine = chrysoeriol + S-adenosyl-L-homocysteine + H(+). It carries out the reaction quercetin + S-adenosyl-L-methionine = isorhamnetin + S-adenosyl-L-homocysteine + H(+). The catalysed reaction is (E)-caffeate + S-adenosyl-L-methionine = (E)-ferulate + S-adenosyl-L-homocysteine + H(+). It catalyses the reaction a 3'-hydroxyflavone + S-adenosyl-L-methionine = a 3'-methoxyflavone + S-adenosyl-L-homocysteine + H(+). It participates in flavonoid metabolism. Functionally, catalyzes the 3'-O-methylation of the flavonoids luteolin and quercetin. Catalyzes the 3- of 5-O-methylation of the phenylpropanoids caffeate and 5-hydroxyferulate. Substrate preference is 5-hydroxyferulate &gt; luteolin &gt; quercetin &gt; caffeate. Apigenin, kempferol and 3,4-dimethylquercetin do not seem to be substrates for methylation. The sequence is that of Flavone 3'-O-methyltransferase OMT2 from Chrysosplenium americanum (American golden saxifrage).